The primary structure comprises 388 residues: Alcohol dehydrogenase patD (388 aa).

Cysteine 46 contacts Zn(2+). Histidine 47 provides a ligand contact to NAD(+). Histidine 67, glutamate 68, cysteine 101, cysteine 104, and cysteine 112 together coordinate Zn(2+). Histidine 67 lines the substrate pocket. NAD(+) contacts are provided by residues 198-203 (VALSRG), 295-297 (SLL), and 320-322 (EEA).

The protein belongs to the zinc-containing alcohol dehydrogenase family. Zn(2+) is required as a cofactor.

Its subcellular location is the cytoplasm. The protein resides in the cytosol. It carries out the reaction neopatulin + NADPH + H(+) = (E)-ascladiol + NADP(+). The protein operates within mycotoxin biosynthesis; patulin biosynthesis. In terms of biological role, alcohol dehydrogenase; part of the gene cluster that mediates the biosynthesis of patulin, an acetate-derived tetraketide mycotoxin produced by several fungal species that shows antimicrobial properties against several bacteria. PatD catalyzes the conversion of neopatulin into E-ascladiol. The pathway begins with the synthesis of 6-methylsalicylic acid by the polyketide synthase (PKS) patK via condensation of acetate and malonate units. The 6-methylsalicylic acid decarboxylase patG then catalyzes the decarboxylation of 6-methylsalicylic acid to yield m-cresol (also known as 3-methylphenol). These first reactions occur in the cytosol. The intermediate m-cresol is then transported into the endoplasmic reticulum where the cytochrome P450 monooxygenase patH converts it to m-hydroxybenzyl alcohol, which is further converted to gentisyl alcohol by the cytochrome P450 monooxygenase patI. The oxidoreductases patJ and patO further convert gentisyl alcohol to isoepoxydon in the vacuole. PatN catalyzes then the transformation of isoepoxydon into phyllostine. The cluster protein patF is responsible for the conversion from phyllostine to neopatulin whereas the alcohol dehydrogenase patD converts neopatulin to E-ascladiol. The steps between isoepoxydon and E-ascladiol occur in the cytosol, and E-ascladiol is probably secreted to the extracellular space by one of the cluster-specific transporters patC or patM. Finally, the secreted patulin synthase patE catalyzes the conversion of E-ascladiol to patulin. This chain is Alcohol dehydrogenase patD, found in Aspergillus clavatus (strain ATCC 1007 / CBS 513.65 / DSM 816 / NCTC 3887 / NRRL 1 / QM 1276 / 107).